The chain runs to 286 residues: Formamidopyrimidine-DNA glycosylase (286 aa).

The active-site Schiff-base intermediate with DNA is the P2. E3 (proton donor) is an active-site residue. K61 acts as the Proton donor; for beta-elimination activity in catalysis. DNA-binding residues include H96, R117, and K160. The FPG-type zinc-finger motif lies at 246-280; that stretch reads DAYGREGLPCRRCATPMRRRPWMNRSSYFCPKCQR. Catalysis depends on R270, which acts as the Proton donor; for delta-elimination activity.

The protein belongs to the FPG family. Monomer. Zn(2+) serves as cofactor.

It carries out the reaction Hydrolysis of DNA containing ring-opened 7-methylguanine residues, releasing 2,6-diamino-4-hydroxy-5-(N-methyl)formamidopyrimidine.. The catalysed reaction is 2'-deoxyribonucleotide-(2'-deoxyribose 5'-phosphate)-2'-deoxyribonucleotide-DNA = a 3'-end 2'-deoxyribonucleotide-(2,3-dehydro-2,3-deoxyribose 5'-phosphate)-DNA + a 5'-end 5'-phospho-2'-deoxyribonucleoside-DNA + H(+). Functionally, involved in base excision repair of DNA damaged by oxidation or by mutagenic agents. Acts as a DNA glycosylase that recognizes and removes damaged bases. Has a preference for oxidized purines, such as 7,8-dihydro-8-oxoguanine (8-oxoG). Has AP (apurinic/apyrimidinic) lyase activity and introduces nicks in the DNA strand. Cleaves the DNA backbone by beta-delta elimination to generate a single-strand break at the site of the removed base with both 3'- and 5'-phosphates. The polypeptide is Formamidopyrimidine-DNA glycosylase (Streptomyces avermitilis (strain ATCC 31267 / DSM 46492 / JCM 5070 / NBRC 14893 / NCIMB 12804 / NRRL 8165 / MA-4680)).